Here is a 250-residue protein sequence, read N- to C-terminus: tRNA pseudouridine synthase A (250 aa).

Asp52 (nucleophile) is an active-site residue. Tyr111 contacts substrate.

The protein belongs to the tRNA pseudouridine synthase TruA family. In terms of assembly, homodimer.

It carries out the reaction uridine(38/39/40) in tRNA = pseudouridine(38/39/40) in tRNA. In terms of biological role, formation of pseudouridine at positions 38, 39 and 40 in the anticodon stem and loop of transfer RNAs. The chain is tRNA pseudouridine synthase A from Methylobacterium sp. (strain 4-46).